The sequence spans 209 residues: Immunoglobulin lambda-like polypeptide 1 (209 aa).

The signal sequence occupies residues 1 to 30 (MKLRVGQTLGTIPRQCEVLLLLLLLGLVDG). Positions 93–104 (VFGGGTQLTILG) are j region. Positions 105-209 (QPKSDPLVTL…EKSVSPAECS (105 aa)) are c region. An Ig-like C1-type domain is found at 110-204 (PLVTLFLPSL…EGNTVEKSVS (95 aa)). Cysteines 131 and 190 form a disulfide.

In terms of assembly, interacts with VPREB1A. Interacts with SYNV1/HRD1 (via N-terminus); this interaction leads to increased IGLL1 ubiquitination and degradation in pre-B cells, possibly through a lysosomal, not proteasomal, pathway. As to expression, selectively expressed in pre-B lymphocytes.

The protein localises to the endoplasmic reticulum. Its subcellular location is the secreted. Critical for B-cell development. The chain is Immunoglobulin lambda-like polypeptide 1 (Igll1) from Mus musculus (Mouse).